A 260-amino-acid polypeptide reads, in one-letter code: Vesicle-associated membrane protein 7B (260 aa).

Residues 1 to 189 (MPIIYSLVAR…KCAMWWKNVK (189 aa)) are Cytoplasmic-facing. One can recognise a Longin domain in the interval 7-110 (LVARGSSVLA…GMNSDFSRTL (104 aa)). Positions 125–186 (TMSRTMAEID…KQLKCAMWWK (62 aa)) constitute a v-SNARE coiled-coil homology domain. The chain crosses the membrane as a helical; Anchor for type IV membrane protein span at residues 190–210 (LMLVLGAIVLIIIFIIVMSYC). The Vesicular segment spans residues 211-260 (DGFRSGSKCRSSPSSNSTPTPTPTETPTPTPTPTSTPTPSQLLETLLNQF). The interval 215 to 250 (SGSKCRSSPSSNSTPTPTPTETPTPTPTPTSTPTPS) is disordered. The segment covering 230–246 (TPTPTETPTPTPTPTST) has biased composition (pro residues).

The protein belongs to the synaptobrevin family.

It localises to the cytoplasmic vesicle. The protein resides in the secretory vesicle membrane. Its subcellular location is the golgi apparatus. The protein localises to the trans-Golgi network membrane. It is found in the late endosome membrane. It localises to the lysosome membrane. The protein resides in the endoplasmic reticulum membrane. Its subcellular location is the phagosome membrane. Involved in the targeting and/or fusion of transport vesicles to their target membrane during transport of proteins from the early endosome to the lysosome. Required for heterotypic fusion of late endosomes with lysosomes and homotypic lysosomal fusion. This is Vesicle-associated membrane protein 7B from Dictyostelium discoideum (Social amoeba).